The following is a 133-amino-acid chain: Small ribosomal subunit protein uS11 (133 aa).

The protein belongs to the universal ribosomal protein uS11 family. In terms of assembly, part of the 30S ribosomal subunit. Interacts with proteins S7 and S18. Binds to IF-3.

Its function is as follows. Located on the platform of the 30S subunit, it bridges several disparate RNA helices of the 16S rRNA. Forms part of the Shine-Dalgarno cleft in the 70S ribosome. The polypeptide is Small ribosomal subunit protein uS11 (Christiangramia forsetii (strain DSM 17595 / CGMCC 1.15422 / KT0803) (Gramella forsetii)).